The following is a 491-amino-acid chain: Aspartyl/glutamyl-tRNA(Asn/Gln) amidotransferase subunit B (491 aa).

Belongs to the GatB/GatE family. GatB subfamily. As to quaternary structure, heterotrimer of A, B and C subunits.

It catalyses the reaction L-glutamyl-tRNA(Gln) + L-glutamine + ATP + H2O = L-glutaminyl-tRNA(Gln) + L-glutamate + ADP + phosphate + H(+). The catalysed reaction is L-aspartyl-tRNA(Asn) + L-glutamine + ATP + H2O = L-asparaginyl-tRNA(Asn) + L-glutamate + ADP + phosphate + 2 H(+). Allows the formation of correctly charged Asn-tRNA(Asn) or Gln-tRNA(Gln) through the transamidation of misacylated Asp-tRNA(Asn) or Glu-tRNA(Gln) in organisms which lack either or both of asparaginyl-tRNA or glutaminyl-tRNA synthetases. The reaction takes place in the presence of glutamine and ATP through an activated phospho-Asp-tRNA(Asn) or phospho-Glu-tRNA(Gln). The polypeptide is Aspartyl/glutamyl-tRNA(Asn/Gln) amidotransferase subunit B (Paraburkholderia xenovorans (strain LB400)).